Reading from the N-terminus, the 993-residue chain is uncharacterized protein (993 aa).

An N-terminal signal peptide occupies residues 1–28 (MKLFPRSILITLVLSFALNLGIVTKIHA). 7 helical membrane passes run 331 to 351 (IVTAFLTLYVMFFGFKLLLAG), 359 to 379 (YINFILKMIFVTYFSIGINIT), 392 to 412 (MIQWAFPFLLDGINGLASWVM), 494 to 514 (MLVSLALSYPLLVISVAAFMV), 521 to 541 (MISIVILGILAPLFVPMFLFA), 554 to 574 (MISFLLQPMVVVTFMITMFSV), and 699 to 719 (IKNILLALVMACFTLYLMYNF). The disordered stretch occupies residues 779 to 904 (GQGGGASDLE…EKVDSTSKGT (126 aa)). Residues 805–829 (TSAPAVTTPTASSSVASSSPKTVSS) show a composition bias toward low complexity. The segment covering 838–850 (PPAPTEAVSPPPA) has biased composition (pro residues). The segment covering 866-879 (IIRDNNQESKKEID) has biased composition (basic and acidic residues).

The protein belongs to the TrbL/VirB6 family.

The protein localises to the cell membrane. This is an uncharacterized protein from Rickettsia conorii (strain ATCC VR-613 / Malish 7).